A 295-amino-acid chain; its full sequence is Cytidine deaminase (295 aa).

CMP/dCMP-type deaminase domains follow at residues 48–168 and 187–295; these read TDNQ…FGPS and EDDD…YLSL. 89–91 lines the substrate pocket; it reads NME. Position 102 (H102) interacts with Zn(2+). Residue E104 is the Proton donor of the active site. Positions 129 and 132 each coordinate Zn(2+).

The protein belongs to the cytidine and deoxycytidylate deaminase family. In terms of assembly, homodimer. Requires Zn(2+) as cofactor.

It catalyses the reaction cytidine + H2O + H(+) = uridine + NH4(+). The enzyme catalyses 2'-deoxycytidine + H2O + H(+) = 2'-deoxyuridine + NH4(+). This enzyme scavenges exogenous and endogenous cytidine and 2'-deoxycytidine for UMP synthesis. The protein is Cytidine deaminase of Vibrio vulnificus (strain YJ016).